The sequence spans 285 residues: Type II restriction enzyme Cfr10I (285 aa).

The Mg(2+) site is built by Asp134 and Glu204.

As to quaternary structure, homodimer. Mg(2+) is required as a cofactor.

It carries out the reaction Endonucleolytic cleavage of DNA to give specific double-stranded fragments with terminal 5'-phosphates.. Its function is as follows. An F and P subtype restriction enzyme that recognizes the double-stranded sequence 5'-RCCGGY-3' and cleaves after R-1. This Citrobacter freundii protein is Type II restriction enzyme Cfr10I (cfr10IR).